The chain runs to 48 residues: Large ribosomal subunit protein bL34 (48 aa).

Belongs to the bacterial ribosomal protein bL34 family.

This chain is Large ribosomal subunit protein bL34 (rpmH), found in Mycoplasma genitalium (strain ATCC 33530 / DSM 19775 / NCTC 10195 / G37) (Mycoplasmoides genitalium).